The following is a 442-amino-acid chain: tRNA-2-methylthio-N(6)-dimethylallyladenosine synthase (442 aa).

An MTTase N-terminal domain is found at 2–120 (KKVFIRTFGC…LPKMIVDKET (119 aa)). C11, C49, C83, C157, C161, and C164 together coordinate [4Fe-4S] cluster. The Radical SAM core domain occupies 143-375 (RVEGGAAFVS…NEVIEAETAR (233 aa)). The 64-residue stretch at 378 to 441 (QTMIGTVQRC…TFSLRGKIVE (64 aa)) folds into the TRAM domain.

It belongs to the methylthiotransferase family. MiaB subfamily. Monomer. The cofactor is [4Fe-4S] cluster.

The protein resides in the cytoplasm. The catalysed reaction is N(6)-dimethylallyladenosine(37) in tRNA + (sulfur carrier)-SH + AH2 + 2 S-adenosyl-L-methionine = 2-methylsulfanyl-N(6)-dimethylallyladenosine(37) in tRNA + (sulfur carrier)-H + 5'-deoxyadenosine + L-methionine + A + S-adenosyl-L-homocysteine + 2 H(+). Catalyzes the methylthiolation of N6-(dimethylallyl)adenosine (i(6)A), leading to the formation of 2-methylthio-N6-(dimethylallyl)adenosine (ms(2)i(6)A) at position 37 in tRNAs that read codons beginning with uridine. The sequence is that of tRNA-2-methylthio-N(6)-dimethylallyladenosine synthase from Neisseria gonorrhoeae (strain NCCP11945).